A 715-amino-acid polypeptide reads, in one-letter code: Metastasis-associated protein MTA1 (715 aa).

The region spanning 1–164 (MAANMYRVGD…PQQKTLLADK (164 aa)) is the BAH domain. Residues 165 to 276 (GEIRVGNRYQ…KAISALVPQG (112 aa)) enclose the ELM2 domain. Residue Lys182 forms a Glycyl lysine isopeptide (Lys-Gly) (interchain with G-Cter in ubiquitin) linkage. The SANT domain maps to 283-335 (DEMEEWSASEANLFEEALEKYGKDFTDIQQDFLPWKSLTSIIEYYYMWKTTDR). Residue Ser386 is modified to Phosphoserine. The GATA-type; atypical zinc finger occupies 393 to 420 (CESCYTTQSYQWYSWGPPNMQCRLCASC). Residues 435–460 (RLDGERPGPNRSNMSPHGLPARSSGS) form a disordered region. Phosphoserine occurs at positions 446 and 449. A Glycyl lysine isopeptide (Lys-Gly) (interchain with G-Cter in SUMO2 and SUMO3) cross-link involves residue Lys509. A Phosphoserine modification is found at Ser522. The SH3-binding motif lies at 545 to 552 (PRPPKPDP). A Glycyl lysine isopeptide (Lys-Gly) (interchain with G-Cter in SUMO2) cross-link involves residue Lys549. At Thr564 the chain carries Phosphothreonine. A Phosphoserine modification is found at Ser576. Phosphothreonine is present on Thr578. At Lys626 the chain carries N6-acetyllysine; alternate. Residue Lys626 forms a Glycyl lysine isopeptide (Lys-Gly) (interchain with G-Cter in ubiquitin); alternate linkage. Residue Ser639 is modified to Phosphoserine. Residues 656–686 (DVFYMATEETRKIRKLLSSSETKRAARRPYK) are interaction with RBBP4. Residues 673 to 715 (SSSETKRAARRPYKPIALRQSQALPPRPPPPAPVNDEPIVIED) are disordered. The SH3-binding signature appears at 696 to 705 (LPPRPPPPAP). The short motif at 711-715 (IVIED) is the SUMO interaction motif 1 (SIM); crucial for efficient sumoylation element.

Belongs to the metastasis-associated protein family. As to quaternary structure, component of the nucleosome remodeling and deacetylase (NuRD) repressor complex, composed of core proteins MTA1, MTA2, MTA3, RBBP4, RBBP7, HDAC1, HDAC2, MBD2, MBD3, and peripherally associated proteins CDK2AP1, CDK2AP2, GATAD2A, GATAD2B, CHD3, CHD4 and CHD5. The exact stoichiometry of the NuRD complex is unknown, and some subunits such as MBD2 and MBD3, GATAD2A and GATAD2B, and CHD3, CHD4 and CHD5 define mutually exclusive NuRD complexes. Interacts with RBBP4; the interaction is direct. Interacts with BMAL1. Interacts with CLOCK. Interacts with COP1. Interacts with CSNK1G2 in the cytoplasm. Interacts with EP300. Interacts with HDAC2. Interacts with IFI16. Interacts with ITGB3BP/CENPR. Interacts with MBD3L2. Interacts with MDM2. Interacts with NACC2. Interacts with p53/TP53. Interacts with PIAS1. Interacts with PIAS3. Interacts with PIAS4. Interacts with PWWP2A. Interacts with PWWP2B. Interacts with SENP1. Interacts with SENP2. Interacts with SIX3; facilitates the binding of SIX3 to the core DNA motif of SIX3 promoter. Interacts with SUMO1. Interacts with SUMO2. Interacts with TFCP2L1; which is indispensable for TFCP2L1-mediated self-renewal-promoting effect and endoderm-inhibiting action. Interacts with TFAP2C. Interacts with TPR. Interacts with UBE2I/UBC9. Phosphorylation by CSNK1G2/CK1 triggered by estrogen enhances corepression of estrogen receptor (ER). Post-translationally, acetylation is essential for its transcriptional coactivator activity. In terms of processing, sumoylation positively regulates its transcriptional corepressor activity but does not affect the protein stability. Sumoylated preferentially by SUMO2 or SUMO3 than SUMO1. Sumoylation is enhanced by PIAS1/3/4 and preferentially sumoylated by SUMO2 in the presence of PIAS1/3/4. Desumoylated by SENP1. Ubiquitinated by COP1, which leads to proteasomal degradation. Widely expressed. High expression in brain, liver, kidney, and cardiac muscle, ovaries, adrenal glands and virgin mammary glands. Higher in tumors than in adjacent normal tissue from the same individual. Up-regulated in a wide variety of cancers including breast, liver, ovarian, and colorectal cancer and its expression levels are closely correlated with tumor aggressiveness and metastasis.

It localises to the nucleus. The protein localises to the cytoplasm. It is found in the nucleus envelope. The protein resides in the cytoskeleton. In terms of biological role, transcriptional coregulator which can act as both a transcriptional corepressor and coactivator. Acts as a component of the histone deacetylase NuRD complex which participates in the remodeling of chromatin. In the NuRD complex, regulates transcription of its targets by modifying the acetylation status of the target chromatin and cofactor accessibility to the target DNA. In conjunction with other components of NuRD, acts as a transcriptional corepressor of BRCA1, ESR1, TFF1 and CDKN1A. Acts as a transcriptional coactivator of BCAS3, and SUMO2, independent of the NuRD complex. Stimulates the expression of WNT1 by inhibiting the expression of its transcriptional corepressor SIX3. Regulates p53-dependent and -independent DNA repair processes following genotoxic stress. Regulates the stability and function of p53/TP53 by inhibiting its ubiquitination by COP1 and MDM2 thereby regulating the p53-dependent DNA repair. Plays a role in the regulation of the circadian clock and is essential for the generation and maintenance of circadian rhythms under constant light and for normal entrainment of behavior to light-dark (LD) cycles. Positively regulates the CLOCK-BMAL1 heterodimer mediated transcriptional activation of its own transcription and the transcription of CRY1. Regulates deacetylation of BMAL1 by regulating SIRT1 expression, resulting in derepressing CRY1-mediated transcription repression. With TFCP2L1, promotes establishment and maintenance of pluripotency in embryonic stem cells (ESCs) and inhibits endoderm differentiation. Its function is as follows. Binds to ESR1 and sequesters it in the cytoplasm and enhances its non-genomic responses. The chain is Metastasis-associated protein MTA1 (MTA1) from Homo sapiens (Human).